Reading from the N-terminus, the 477-residue chain is Protoporphyrinogen oxidase (477 aa).

FAD-binding positions include 9 to 14, Trp42, 57 to 60, Val257, Ala449, and 454 to 456; these read GGGISG, GPRG, and VAV.

It belongs to the protoporphyrinogen/coproporphyrinogen oxidase family. Protoporphyrinogen oxidase subfamily. As to quaternary structure, monomer. Homodimer. FAD serves as cofactor. Detected in liver (at protein level).

The protein resides in the mitochondrion inner membrane. The enzyme catalyses protoporphyrinogen IX + 3 O2 = protoporphyrin IX + 3 H2O2. It functions in the pathway porphyrin-containing compound metabolism; protoporphyrin-IX biosynthesis; protoporphyrin-IX from protoporphyrinogen-IX: step 1/1. In terms of biological role, catalyzes the 6-electron oxidation of protoporphyrinogen-IX to form protoporphyrin-IX. This Bos taurus (Bovine) protein is Protoporphyrinogen oxidase (PPOX).